A 319-amino-acid chain; its full sequence is Pantothenate kinase (319 aa).

An ATP-binding site is contributed by 101–108 (GSVAVGKS).

It belongs to the prokaryotic pantothenate kinase family.

It is found in the cytoplasm. The catalysed reaction is (R)-pantothenate + ATP = (R)-4'-phosphopantothenate + ADP + H(+). It functions in the pathway cofactor biosynthesis; coenzyme A biosynthesis; CoA from (R)-pantothenate: step 1/5. In Clavibacter michiganensis subsp. michiganensis (strain NCPPB 382), this protein is Pantothenate kinase.